The primary structure comprises 114 residues: uncharacterized protein (114 aa).

A helical membrane pass occupies residues Y7–L27. A disordered region spans residues K90–R114.

Its subcellular location is the membrane. This is an uncharacterized protein from Saccharomyces cerevisiae (strain ATCC 204508 / S288c) (Baker's yeast).